The following is a 53-amino-acid chain: Sec-independent protein translocase protein TatA (53 aa).

Residues 1–21 (MGMSFSHLLIVLLIIFVLFGA) traverse the membrane as a helical segment.

It belongs to the TatA/E family. In terms of assembly, the Tat system comprises two distinct complexes: a TatABC complex, containing multiple copies of TatA, TatB and TatC subunits, and a separate TatA complex, containing only TatA subunits. Substrates initially bind to the TatABC complex, which probably triggers association of the separate TatA complex to form the active translocon.

The protein localises to the cell inner membrane. In terms of biological role, part of the twin-arginine translocation (Tat) system that transports large folded proteins containing a characteristic twin-arginine motif in their signal peptide across membranes. TatA could form the protein-conducting channel of the Tat system. The protein is Sec-independent protein translocase protein TatA of Rickettsia africae (strain ESF-5).